Consider the following 221-residue polypeptide: Translation initiation factor 6 (221 aa).

It belongs to the eIF-6 family.

Binds to the 50S ribosomal subunit and prevents its association with the 30S ribosomal subunit to form the 70S initiation complex. In Cenarchaeum symbiosum (strain A), this protein is Translation initiation factor 6.